The chain runs to 327 residues: uncharacterized protein (327 aa).

The region spanning 12 to 79 (KRIDEFLAKE…LKKELDLEIE (68 aa)) is the S4 RNA-binding domain. Residue D136 is part of the active site.

Belongs to the pseudouridine synthase RluA family.

The catalysed reaction is a uridine in RNA = a pseudouridine in RNA. This is an uncharacterized protein from Helicobacter pylori (strain J99 / ATCC 700824) (Campylobacter pylori J99).